The sequence spans 185 residues: TATA-box-binding protein (185 aa).

2 tandem repeats follow at residues 8–84 (IENI…VEML) and 99–175 (IQNM…LHEL).

The protein belongs to the TBP family.

In terms of biological role, general factor that plays a role in the activation of archaeal genes transcribed by RNA polymerase. Binds specifically to the TATA box promoter element which lies close to the position of transcription initiation. This is TATA-box-binding protein from Thermococcus sibiricus (strain DSM 12597 / MM 739).